Consider the following 242-residue polypeptide: Venom nerve growth factor 3 (242 aa).

Residues Met-1 to Ala-18 form the signal peptide. The propeptide occupies Ala-19–Arg-125. Basic and acidic residues predominate over residues Leu-48–Asp-66. The interval Leu-48–Leu-69 is disordered. 3 disulfide bridges follow: Cys-139–Cys-203, Cys-181–Cys-231, and Cys-191–Cys-233. Residue Asn-147 is glycosylated (N-linked (GlcNAc...) asparagine).

This sequence belongs to the NGF-beta family. As to quaternary structure, homodimer; non-covalently linked. Expressed by the venom gland.

The protein localises to the secreted. Nerve growth factor is important for the development and maintenance of the sympathetic and sensory nervous systems. It stimulates division and differentiation of sympathetic and embryonic sensory neurons as well as basal forebrain cholinergic neurons in the brain. Its relevance in the snake venom is not clear. However, it has been shown to inhibit metalloproteinase-dependent proteolysis of platelet glycoprotein Ib alpha, suggesting a metalloproteinase inhibition to prevent metalloprotease autodigestion and/or protection against prey proteases. Binds a lipid between the two protein chains in the homodimer. The lipid-bound form promotes histamine relase from mouse mast cells, contrary to the lipid-free form. In Demansia vestigiata (Lesser black whip snake), this protein is Venom nerve growth factor 3.